The following is a 202-amino-acid chain: Putative chromophore lyase CpcV (202 aa).

Belongs to the CpcS/CpeS biliprotein lyase family.

Covalently attaches a chromophore to Cys residue(s) of phycobiliproteins. The chain is Putative chromophore lyase CpcV (cpcV) from Picosynechococcus sp. (strain ATCC 27264 / PCC 7002 / PR-6) (Agmenellum quadruplicatum).